A 198-amino-acid chain; its full sequence is ATP-dependent Clp protease proteolytic subunit (198 aa).

Residue serine 103 is the Nucleophile of the active site. The active site involves histidine 128.

Belongs to the peptidase S14 family. In terms of assembly, fourteen ClpP subunits assemble into 2 heptameric rings which stack back to back to give a disk-like structure with a central cavity, resembling the structure of eukaryotic proteasomes.

The protein localises to the cytoplasm. It carries out the reaction Hydrolysis of proteins to small peptides in the presence of ATP and magnesium. alpha-casein is the usual test substrate. In the absence of ATP, only oligopeptides shorter than five residues are hydrolyzed (such as succinyl-Leu-Tyr-|-NHMec, and Leu-Tyr-Leu-|-Tyr-Trp, in which cleavage of the -Tyr-|-Leu- and -Tyr-|-Trp bonds also occurs).. Cleaves peptides in various proteins in a process that requires ATP hydrolysis. Has a chymotrypsin-like activity. Plays a major role in the degradation of misfolded proteins. The sequence is that of ATP-dependent Clp protease proteolytic subunit from Vesicomyosocius okutanii subsp. Calyptogena okutanii (strain HA).